We begin with the raw amino-acid sequence, 146 residues long: NADH-quinone oxidoreductase subunit A (146 aa).

The next 3 membrane-spanning stretches (helical) occupy residues 8-28, 63-83, and 93-113; these read FGSV…GYLT, FYVV…LYPW, and FALI…AYAW.

Belongs to the complex I subunit 3 family. In terms of assembly, NDH-1 is composed of 14 different subunits. Subunits NuoA, H, J, K, L, M, N constitute the membrane sector of the complex.

It localises to the cell inner membrane. It catalyses the reaction a quinone + NADH + 5 H(+)(in) = a quinol + NAD(+) + 4 H(+)(out). Its function is as follows. NDH-1 shuttles electrons from NADH, via FMN and iron-sulfur (Fe-S) centers, to quinones in the respiratory chain. The immediate electron acceptor for the enzyme in this species is believed to be a menaquinone. Couples the redox reaction to proton translocation (for every two electrons transferred, four hydrogen ions are translocated across the cytoplasmic membrane), and thus conserves the redox energy in a proton gradient. This is NADH-quinone oxidoreductase subunit A from Chlorobium chlorochromatii (strain CaD3).